A 287-amino-acid chain; its full sequence is Pyridoxal kinase PdxY (287 aa).

Substrate is bound by residues S9 and 44–45 (MQ). Residues D111, A142, E147, and K180 each contribute to the ATP site. Residue D221 coordinates substrate.

This sequence belongs to the pyridoxine kinase family. PdxY subfamily. In terms of assembly, homodimer. Mg(2+) is required as a cofactor.

It catalyses the reaction pyridoxal + ATP = pyridoxal 5'-phosphate + ADP + H(+). It functions in the pathway cofactor metabolism; pyridoxal 5'-phosphate salvage; pyridoxal 5'-phosphate from pyridoxal: step 1/1. In terms of biological role, pyridoxal kinase involved in the salvage pathway of pyridoxal 5'-phosphate (PLP). Catalyzes the phosphorylation of pyridoxal to PLP. This is Pyridoxal kinase PdxY from Burkholderia pseudomallei (strain K96243).